Here is a 302-residue protein sequence, read N- to C-terminus: Putative peptide permease protein BMEII0861 (302 aa).

Positions 1 to 22 (MRSSIHASRLRKMGQSIPASTG) are disordered. A run of 5 helical transmembrane segments spans residues 38 to 58 (IFGL…PLWL), 101 to 121 (LLVA…IGAI), 147 to 167 (IFLL…VVVI), 230 to 250 (ILLE…AASW), and 268 to 288 (WQWL…NFIG). The ABC transmembrane type-1 domain maps to 97-288 (GRISLLVAVS…LAVLAINFIG (192 aa)).

It belongs to the binding-protein-dependent transport system permease family. The complex is composed of two ATP-binding proteins (BMEII0863 and BMEII0864), two transmembrane proteins (BMEII0860 and BMEII0861) and a solute-binding protein (BMEII0859).

It localises to the cell inner membrane. In terms of biological role, probably part of an ABC transporter complex that could be involved in peptide import. Probably responsible for the translocation of the substrate across the membrane. In Brucella melitensis biotype 1 (strain ATCC 23456 / CCUG 17765 / NCTC 10094 / 16M), this protein is Putative peptide permease protein BMEII0861.